The chain runs to 271 residues: Sulfur carrier protein adenylyltransferase (271 aa).

Residues R13, G40, E61, R72, K85, L109, and 129-133 (DNFPT) each bind ATP. The Zn(2+) site is built by C175 and C178. A Glycyl cysteine thioester (Cys-Gly) (interchain with G-Cter in TtuB) cross-link involves residue C192. Residues C249 and C252 each coordinate Zn(2+).

This sequence belongs to the HesA/MoeB/ThiF family. The cofactor is Zn(2+). Post-translationally, conjugated to TtuB via a covalent linkage that likely involves a lysine residue. Is able to form a covalent thioester adduct with TtuB via Cys-192 in vitro.

The catalysed reaction is [molybdopterin-synthase sulfur-carrier protein]-C-terminal Gly-Gly + ATP + H(+) = [molybdopterin-synthase sulfur-carrier protein]-C-terminal Gly-Gly-AMP + diphosphate. It catalyses the reaction [ThiS sulfur-carrier protein]-C-terminal Gly-Gly + ATP + H(+) = [ThiS sulfur-carrier protein]-C-terminal Gly-Gly-AMP + diphosphate. It carries out the reaction [TtuB sulfur-carrier protein]-C-terminal Gly-Gly + ATP + H(+) = [TtuB sulfur-carrier protein]-C-terminal Gly-Gly-AMP + diphosphate. The protein operates within tRNA modification. It functions in the pathway cofactor biosynthesis; thiamine diphosphate biosynthesis. Its pathway is cofactor biosynthesis; molybdopterin biosynthesis. With respect to regulation, enzymatic activity may be regulated by TtuB conjugation. Functionally, adenylyltransferase involved in the biosynthesis of several sulfur compounds. Is required for the 2-thiolation of 5-methyluridine residue at position 54 in the T loop of tRNAs, leading to 5-methyl-2-thiouridine (m(5)s(2)U or s(2)T). This modification allows thermal stabilization of tRNAs in thermophilic microorganisms, and is essential for cell growth at high temperatures. TtuC catalyzes the adenylation by ATP of the carboxyl group of the C-terminal glycine of sulfur carrier protein TtuB. Is also involved in the biosynthesis of thiamine, molybdenum cofactor (Moco) and probably tungsten cofactor (Wco), by adenylating the sulfur carriers ThiS and MoaD. Is required for the conjugation of TtuB to target proteins. The sequence is that of Sulfur carrier protein adenylyltransferase from Thermus thermophilus (strain ATCC BAA-163 / DSM 7039 / HB27).